Reading from the N-terminus, the 89-residue chain is Nitrogen regulatory protein (89 aa).

A PTS EIIA type-2 domain is found at 6-89 (TILTPGRSLV…ALLHLEAPID (84 aa)). H68 functions as the Tele-phosphohistidine intermediate in the catalytic mechanism.

It localises to the cytoplasm. Its function is as follows. Seems to have a role in regulating nitrogen assimilation. The sequence is that of Nitrogen regulatory protein (ptsN) from Pseudomonas putida (Arthrobacter siderocapsulatus).